Reading from the N-terminus, the 193-residue chain is Large ribosomal subunit protein uL5 (193 aa).

This sequence belongs to the universal ribosomal protein uL5 family. In terms of assembly, part of the 50S ribosomal subunit; part of the 5S rRNA/L5/L18/L25 subcomplex. Contacts the 5S rRNA and the P site tRNA. Forms a bridge to the 30S subunit in the 70S ribosome.

Its function is as follows. This is one of the proteins that bind and probably mediate the attachment of the 5S RNA into the large ribosomal subunit, where it forms part of the central protuberance. In the 70S ribosome it contacts protein S13 of the 30S subunit (bridge B1b), connecting the 2 subunits; this bridge is implicated in subunit movement. Contacts the P site tRNA; the 5S rRNA and some of its associated proteins might help stabilize positioning of ribosome-bound tRNAs. This is Large ribosomal subunit protein uL5 from Arthrobacter sp. (strain FB24).